The following is a 169-amino-acid chain: uncharacterized protein (169 aa).

Residues 32-162 (CNFRVVNSFV…EPAKSDLIKL (131 aa)) form the Nudix hydrolase domain. The Nudix box signature appears at 69 to 91 (GGHVESGETYEDALQRELEEELN). Mg(2+) is bound by residues E85 and E89.

Belongs to the Nudix hydrolase family. It depends on Mg(2+) as a cofactor.

This is an uncharacterized protein from Nostoc sp. (strain PCC 7120 / SAG 25.82 / UTEX 2576).